Reading from the N-terminus, the 420-residue chain is Serine--tRNA ligase (420 aa).

228 to 230 (TAE) contributes to the L-serine binding site. 259 to 261 (RSE) is a binding site for ATP. L-serine is bound at residue E282. 346-349 (EISS) provides a ligand contact to ATP. An L-serine-binding site is contributed by S382.

Belongs to the class-II aminoacyl-tRNA synthetase family. Type-1 seryl-tRNA synthetase subfamily. Homodimer. The tRNA molecule binds across the dimer.

The protein localises to the cytoplasm. The enzyme catalyses tRNA(Ser) + L-serine + ATP = L-seryl-tRNA(Ser) + AMP + diphosphate + H(+). It catalyses the reaction tRNA(Sec) + L-serine + ATP = L-seryl-tRNA(Sec) + AMP + diphosphate + H(+). It functions in the pathway aminoacyl-tRNA biosynthesis; selenocysteinyl-tRNA(Sec) biosynthesis; L-seryl-tRNA(Sec) from L-serine and tRNA(Sec): step 1/1. In terms of biological role, catalyzes the attachment of serine to tRNA(Ser). Is also able to aminoacylate tRNA(Sec) with serine, to form the misacylated tRNA L-seryl-tRNA(Sec), which will be further converted into selenocysteinyl-tRNA(Sec). This chain is Serine--tRNA ligase, found in Mycoplasmoides gallisepticum (strain R(low / passage 15 / clone 2)) (Mycoplasma gallisepticum).